The following is a 211-amino-acid chain: Regulator of G-protein signaling 2 (211 aa).

Residues 32-66 (KMKRTLLKDWKTRLSYFLQNSSTPGKPKTGKKSKQ) form a necessary for membrane association region. A necessary to inhibit protein synthesis region spans residues 79-116 (LWAEAFDELLASKYGLAAFRAFLKSEFCEENIEFWLAC). An RGS domain is found at 83–199 (AFDELLASKY…LESEFYQDLC (117 aa)).

In terms of assembly, interacts with GNAQ. Does not interact with GNAI1 and GNAI3. Interacts with EIF2B5. Interacts with PRKG1 (isoform alpha). Post-translationally, phosphorylated by protein kinase C. Phosphorylation by PRKG1 leads to activation of RGS2 activity.

The protein resides in the cell membrane. It localises to the cytoplasm. Its subcellular location is the nucleus. The protein localises to the nucleolus. In terms of biological role, regulates G protein-coupled receptor signaling cascades. Inhibits signal transduction by increasing the GTPase activity of G protein alpha subunits, thereby driving them into their inactive GDP-bound form. It is involved in the negative regulation of the angiotensin-activated signaling pathway. Plays a role in the regulation of blood pressure in response to signaling via G protein-coupled receptors and GNAQ. Plays a role in regulating the constriction and relaxation of vascular smooth muscle. Binds EIF2B5 and blocks its activity, thereby inhibiting the translation of mRNA into protein. This Rattus norvegicus (Rat) protein is Regulator of G-protein signaling 2 (Rgs2).